Here is a 152-residue protein sequence, read N- to C-terminus: Phospholipase A2 GL16-1 (152 aa).

A signal peptide spans 1 to 21 (MNPAHLLVLLAVCVSLLGAST). The propeptide occupies 22–27 (IPPLPL). Intrachain disulfides connect C38–C104, C54–C151, C56–C72, C71–C132, C78–C125, C88–C118, and C111–C123. Positions 55, 57, and 59 each coordinate Ca(2+). The active site involves H75. D76 lines the Ca(2+) pocket. Residue D126 is part of the active site.

It belongs to the phospholipase A2 family. Group I subfamily. The cofactor is Ca(2+).

The protein localises to the secreted. The catalysed reaction is a 1,2-diacyl-sn-glycero-3-phosphocholine + H2O = a 1-acyl-sn-glycero-3-phosphocholine + a fatty acid + H(+). In terms of biological role, PA2 catalyzes the calcium-dependent hydrolysis of the 2-acyl groups in 3-sn-phosphoglycerides. This Laticauda semifasciata (Black-banded sea krait) protein is Phospholipase A2 GL16-1.